The chain runs to 198 residues: dTTP/UTP pyrophosphatase (198 aa).

The active-site Proton acceptor is aspartate 75.

Belongs to the Maf family. YhdE subfamily. A divalent metal cation serves as cofactor.

It localises to the cytoplasm. The catalysed reaction is dTTP + H2O = dTMP + diphosphate + H(+). The enzyme catalyses UTP + H2O = UMP + diphosphate + H(+). Nucleoside triphosphate pyrophosphatase that hydrolyzes dTTP and UTP. May have a dual role in cell division arrest and in preventing the incorporation of modified nucleotides into cellular nucleic acids. In Wolbachia sp. subsp. Brugia malayi (strain TRS), this protein is dTTP/UTP pyrophosphatase.